Here is a 367-residue protein sequence, read N- to C-terminus: MMETQLYIGIMSGTSMDGADAVLIRMDGGKWLGAEGHAFTPYPDRLRRQLLDLQDTGADELHRSRILSQELSRLYAQTAAELLCSQNLAPSDITALGCHGQTVRHAPEHGYSIQLADLPLLAERTRIFTVGDFRSRDLAAGGQGAPLVPAFHEALFRDNRETRAVLNIGGIANISVLPPDAPAFGFDTGPGNMLMDAWTQAHWQLPYDKNGAKAAQGNILPQLLDRLLAHPYFARPHPKSTGRELFALNWLETYLDGGENRYDVLRTLSRFTAQTVFDAVSHAAADTRQMYICGGGIRNPVLMADLAECFGTRVSLHSTAELNLDPQWVEAAAFAWLAACWINRIPGSPHKATGASKPCILGAGYYY.

13–20 (GTSMDGAD) provides a ligand contact to ATP.

This sequence belongs to the anhydro-N-acetylmuramic acid kinase family.

It carries out the reaction 1,6-anhydro-N-acetyl-beta-muramate + ATP + H2O = N-acetyl-D-muramate 6-phosphate + ADP + H(+). It functions in the pathway amino-sugar metabolism; 1,6-anhydro-N-acetylmuramate degradation. Its pathway is cell wall biogenesis; peptidoglycan recycling. Its function is as follows. Catalyzes the specific phosphorylation of 1,6-anhydro-N-acetylmuramic acid (anhMurNAc) with the simultaneous cleavage of the 1,6-anhydro ring, generating MurNAc-6-P. Is required for the utilization of anhMurNAc either imported from the medium or derived from its own cell wall murein, and thus plays a role in cell wall recycling. This chain is Anhydro-N-acetylmuramic acid kinase, found in Neisseria meningitidis serogroup C / serotype 2a (strain ATCC 700532 / DSM 15464 / FAM18).